The sequence spans 848 residues: Adenylate cyclase (848 aa).

Positions 1-535 are catalytic; the sequence is MYLYIETLKQ…DVSHHFPLRL (535 aa). Residues 541 to 848 form a regulatory region; that stretch reads KALYSPCEIR…DAPLLQQYFS (308 aa). His609 carries the post-translational modification Phosphohistidine; by CRR.

It belongs to the adenylyl cyclase class-1 family.

It localises to the cytoplasm. The catalysed reaction is ATP = 3',5'-cyclic AMP + diphosphate. The sequence is that of Adenylate cyclase (cyaA) from Salmonella typhi.